The primary structure comprises 919 residues: Kinesin-like protein KIN-6 (919 aa).

The segment at 1 to 59 is disordered; sequence MVRLSTKPPNPKVEMNLKEPPITGAGAGAAASPPAPSTLRRNPPRSARPPPTPLPNSKP. Residues 28 to 45 are compositionally biased toward low complexity; sequence GAAASPPAPSTLRRNPPR. A compositionally biased stretch (pro residues) spans 46–56; that stretch reads SARPPPTPLPN. Residues 72-415 form the Kinesin motor domain; the sequence is RLKVFLRIRP…LRQASPYMKI (344 aa). An ATP-binding site is contributed by 171-178; that stretch reads GPTGSGKT. Disordered regions lie at residues 591 to 615, 674 to 700, 711 to 730, 737 to 764, and 886 to 919; these read EEVSEESTGHGPERSSDYDDKTGTG, SESCSDGGGVTHSSSSLDHPSDQSFTD, SPQFIGASKKSPIEQSEEER, TTEGIQQNVHTRGVKHHSTPSCSQEVNS, and KEEKVKSSRDAMGRSDKLIRLLTDHPPRARGRAQ. Residues 597–612 are compositionally biased toward basic and acidic residues; sequence STGHGPERSSDYDDKT. Low complexity predominate over residues 685 to 697; it reads HSSSSLDHPSDQS. A compositionally biased stretch (polar residues) spans 755-764; the sequence is TPSCSQEVNS. Positions 886–912 are enriched in basic and acidic residues; it reads KEEKVKSSRDAMGRSDKLIRLLTDHPP.

Belongs to the TRAFAC class myosin-kinesin ATPase superfamily. Kinesin family. KIN-6 subfamily.

This chain is Kinesin-like protein KIN-6, found in Oryza sativa subsp. japonica (Rice).